The primary structure comprises 315 residues: Probable cell division protein WhiA (315 aa).

The segment at residues 280–313 (SLKELGDLLDPPLSKSGVAYRMRKLEESVKEILQ) is a DNA-binding region (H-T-H motif).

Belongs to the WhiA family.

Involved in cell division and chromosome segregation. In Syntrophomonas wolfei subsp. wolfei (strain DSM 2245B / Goettingen), this protein is Probable cell division protein WhiA.